The sequence spans 705 residues: MNQNRTGGVSKVKNKSAAPVQITAEQILRVAHENQQTLPKAPPKQVITDQEELEDYRLRKRQQYESLLGRNRKTAAIYIKYAAWEESQKDLTRARSVFERFLDIDHRIPTVWIKYAEMEMKNKNINLARNIWDRAVCLLPRVSQLWFKYTFMEDMLGNYPAARAIFERWMQWKPEPQAWNSYLKFEQRLKLFENTRLIFEKYILVHPYIKTWIKYTKFEERLGNIENARTIFQRAIEFLGEDGNDEQLFIAFAKFEEKYKEIERARVIYKYAIDHVPKSRAKDLFDTFTNFEKQHGDRIGIEDVVLGKKRFQYEEEIKKNSKNYDIWFDYLKMEEINGEIEKTREIYERSIGNLPPTNEKKHWKRYIYLWINYALFEELISKDMERARSVYSECIKLIPHKEFSFSKIWILYANFEIRQLNLDKARLIYGQAIGRNPKSKIFDQYIHLEIELGNFDRVRTLYEKYLEIMPDNCDAWCKFAQLETELGETVRARAIFELAIQQPNLDRPEVVWKDFIDSEIQLKQFDFVKQLYRKLLEKTNHVKVWIGFIKFVHSIKDKQQQKQRQQQQEEDGDSNTTKKDGGDDDNNDDINKPTREIFIEAHKSLSNSDKEERLLLLESWKEFEQTFGNQETLNQVLKKIPQRVIKRRSDGNGGIEEYFDYIFPEEEKSTQTSLKLLEAAQRWKKLKQQQELQKQQELQKQQQDS.

HAT repeat units follow at residues 55–87, 89–121, 123–155, 157–188, 190–221, 223–258, 260–294, 304–336, 338–372, 382–418, 420–451, 453–485, 487–521, and 523–554; these read DYRLRKRQQYESLLGRNRKTAAIYIKYAAWEES, KDLTRARSVFERFLDIDHRIPTVWIKYAEMEMK, KNINLARNIWDRAVCLLPRVSQLWFKYTFMEDM, GNYPAARAIFERWMQWKPEPQAWNSYLKFEQR, KLFENTRLIFEKYILVHPYIKTWIKYTKFEER, GNIENARTIFQRAIEFLGEDGNDEQLFIAFAKFEEK, KEIERARVIYKYAIDHVPKSRAKDLFDTFTNFEKQ, VVLGKKRFQYEEEIKKNSKNYDIWFDYLKMEEI, GEIEKTREIYERSIGNLPPTNEKKHWKRYIYLWIN, KDMERARSVYSECIKLIPHKEFSFSKIWILYANFEIR, LNLDKARLIYGQAIGRNPKSKIFDQYIHLEIE, GNFDRVRTLYEKYLEIMPDNCDAWCKFAQLETE, GETVRARAIFELAIQQPNLDRPEVVWKDFIDSEIQ, and KQFDFVKQLYRKLLEKTNHVKVWIGFIKFVHS. The segment at 559–591 is disordered; that stretch reads QQQKQRQQQQEEDGDSNTTKKDGGDDDNNDDIN. An HAT 15 repeat occupies 597–629; the sequence is IFIEAHKSLSNSDKEERLLLLESWKEFEQTFGN.

It belongs to the crooked-neck family. Identified in the spliceosome C complex.

It is found in the nucleus. It localises to the nucleus speckle. In terms of biological role, involved in pre-mRNA splicing process. The chain is Crooked neck-like protein 1 (crnkl1) from Dictyostelium discoideum (Social amoeba).